The primary structure comprises 65 residues: MLIAFQGAVFALVLLSFVLIVAVPVALASPGEWERSQRLIYAGAALWTSLIIVIGVLDSVVANQA.

2 consecutive transmembrane segments (helical) span residues 8-28 (AVFALVLLSFVLIVAVPVALA) and 41-61 (YAGAALWTSLIIVIGVLDSVV).

This sequence belongs to the PsbZ family. In terms of assembly, PSII is composed of 1 copy each of membrane proteins PsbA, PsbB, PsbC, PsbD, PsbE, PsbF, PsbH, PsbI, PsbJ, PsbK, PsbL, PsbM, PsbT, PsbX, PsbY, PsbZ, Psb30/Ycf12, at least 3 peripheral proteins of the oxygen-evolving complex and a large number of cofactors. It forms dimeric complexes.

The protein localises to the plastid. Its subcellular location is the cyanelle thylakoid membrane. Functionally, may control the interaction of photosystem II (PSII) cores with the light-harvesting antenna, regulates electron flow through the 2 photosystem reaction centers. PSII is a light-driven water plastoquinone oxidoreductase, using light energy to abstract electrons from H(2)O, generating a proton gradient subsequently used for ATP formation. The polypeptide is Photosystem II reaction center protein Z (Cyanophora paradoxa).